The following is a 496-amino-acid chain: Cytochrome P450 71AV8 (496 aa).

Residues I3–T23 traverse the membrane as a helical segment. Residue C432 coordinates heme.

Belongs to the cytochrome P450 family. Requires heme as cofactor.

It is found in the membrane. Functionally, valencene oxidase, which preferentially hydroylates the C2 position of (+)-valencene in the trans-orientation, producing trans-nootkatol that can be further oxidized to (+)-nootkatone. Can also catalyze the three-step conversion of germacrene A to germacra-1(10),4,11(13)-trien-12-oic acid and the partial conversion of the non-natural substrate amorpha-4,11-diene into artemisinic alcohol and artemisinic aldehyde. This Cichorium intybus (Chicory) protein is Cytochrome P450 71AV8 (CYP71AV8).